The following is a 151-amino-acid chain: UPF0735 ACT domain-containing protein SH1278 (151 aa).

The 76-residue stretch at 74-149 (TLILYVNDIV…HVSKVELISM (76 aa)) folds into the ACT domain.

This sequence belongs to the UPF0735 family.

This chain is UPF0735 ACT domain-containing protein SH1278, found in Staphylococcus haemolyticus (strain JCSC1435).